The chain runs to 450 residues: 23S rRNA (uracil(1939)-C(5))-methyltransferase RlmD (450 aa).

A TRAM domain is found at 1 to 62 (MPVAGPLDIV…PSYEQAGVVN (62 aa)). [4Fe-4S] cluster contacts are provided by cysteine 75, cysteine 81, cysteine 84, and cysteine 163. 6 residues coordinate S-adenosyl-L-methionine: glutamine 271, phenylalanine 300, asparagine 305, glutamate 321, asparagine 349, and aspartate 370. Cysteine 406 functions as the Nucleophile in the catalytic mechanism.

It belongs to the class I-like SAM-binding methyltransferase superfamily. RNA M5U methyltransferase family. RlmD subfamily.

The catalysed reaction is uridine(1939) in 23S rRNA + S-adenosyl-L-methionine = 5-methyluridine(1939) in 23S rRNA + S-adenosyl-L-homocysteine + H(+). In terms of biological role, catalyzes the formation of 5-methyl-uridine at position 1939 (m5U1939) in 23S rRNA. This Ralstonia pickettii (strain 12J) protein is 23S rRNA (uracil(1939)-C(5))-methyltransferase RlmD.